The primary structure comprises 426 residues: Ubiquitin carboxyl-terminal hydrolase 46 (426 aa).

Glycine 2 is lipidated: N-myristoyl glycine. One can recognise a USP domain in the interval 27-406 (YGLVNFGNTC…SAYILFYQAR (380 aa)). Cysteine 36 (nucleophile) is an active-site residue. Residues 162 to 181 (TAGLPRSDEKGTSERNGGIT) form a disordered region. Catalysis depends on histidine 342, which acts as the Proton acceptor.

Belongs to the peptidase C19 family. In terms of assembly, interacts with wdr-20 and wdr-48; the catalytic activity of usp-46 is increased in the presence of both wdr-20 and wdr-48. Interacts with glr-1; the interaction results in deubiquitination of glr-1. Expressed in a number of tissues including the nervous system, pharynx, body wall muscle, vulva muscle and intestine and is detected in many head and ventral cord neurons.

The protein resides in the perikaryon. The protein localises to the cytoplasm. The enzyme catalyses Thiol-dependent hydrolysis of ester, thioester, amide, peptide and isopeptide bonds formed by the C-terminal Gly of ubiquitin (a 76-residue protein attached to proteins as an intracellular targeting signal).. Regulates the abundance of the glr-1 glutamate receptor in the ventral nerve cord by promoting its deubiquitination and preventing its degradation in the lysosome. Contributes to the regulation of embryonic polarity. The sequence is that of Ubiquitin carboxyl-terminal hydrolase 46 (usp-46) from Caenorhabditis elegans.